The following is a 611-amino-acid chain: Angiotensin-converting enzyme (611 aa).

An N-terminal signal peptide occupies residues 1–17 (MKLLVVTILAGLAVCHG). Residues 19-607 (TKEEIVATEY…VESLCHQRYK (589 aa)) enclose the Peptidase M2 domain. Asn-53 carries N-linked (GlcNAc...) asparagine glycosylation. A disulfide bridge connects residues Cys-133 and Cys-141. An N-linked (GlcNAc...) asparagine glycan is attached at Asn-196. Cys-336 and Cys-354 form a disulfide bridge. A Zn(2+)-binding site is contributed by His-367. Glu-368 serves as the catalytic Proton acceptor. Residues His-371 and Glu-395 each coordinate Zn(2+). The active-site Proton donor is the His-497. Cys-522 and Cys-540 form a disulfide bridge. Asn-531 is a glycosylation site (N-linked (GlcNAc...) asparagine).

The protein belongs to the peptidase M2 family. Requires Zn(2+) as cofactor. In terms of tissue distribution, expressed in the compound ganglion and in the posterior region of the midgut.

Its subcellular location is the secreted. The protein localises to the extracellular space. The enzyme catalyses Release of a C-terminal dipeptide, oligopeptide-|-Xaa-Yaa, when Xaa is not Pro, and Yaa is neither Asp nor Glu. Thus, conversion of angiotensin I to angiotensin II, with increase in vasoconstrictor activity, but no action on angiotensin II.. Functionally, involved in the specific maturation or degradation of a number of bioactive peptides. The protein is Angiotensin-converting enzyme (ACE) of Haematobia irritans exigua (Buffalo fly).